The chain runs to 186 residues: Interferon beta (186 aa).

An N-terminal signal peptide occupies residues 1-21 (MTYRWILPMALLLCFSTTALS). At tyrosine 24 the chain carries Phosphotyrosine. Cysteine 52 and cysteine 161 are oxidised to a cystine. Asparagine 101 and asparagine 136 each carry an N-linked (GlcNAc...) asparagine glycan.

It belongs to the alpha/beta interferon family. Monomer.

The protein localises to the secreted. In terms of biological role, type I interferon cytokine that plays a key role in the innate immune response to infection, developing tumors and other inflammatory stimuli. Signals via binding to high-affinity (IFNAR2) and low-affinity (IFNAR1) heterodimeric receptor, activating the canonical Jak-STAT signaling pathway resulting in transcriptional activation or repression of interferon-regulated genes that encode the effectors of the interferon response, such as antiviral proteins, regulators of cell proliferation and differentiation, and immunoregulatory proteins. Signals mostly via binding to a IFNAR1-IFNAR2 heterodimeric receptor, but can also function with IFNAR1 alone and independently of Jak-STAT pathways. Elicits a wide variety of responses, including antiviral and antibacterial activities, and can regulate the development of B-cells, myelopoiesis and lipopolysaccharide (LPS)-inducible production of tumor necrosis factor. Plays a role in neuronal homeostasis by regulating dopamine turnover and protecting dopaminergic neurons: acts by promoting neuronal autophagy and alpha-synuclein clearance, thereby preventing dopaminergic neuron loss. IFNB1 is more potent than interferon-alpha (IFN-alpha) in inducing the apoptotic and antiproliferative pathways required for control of tumor cell growth. The protein is Interferon beta (IFNB1) of Equus caballus (Horse).